A 479-amino-acid chain; its full sequence is Bifunctional protein HldE (479 aa).

Residues 1–322 (MLAETQLAPI…AALERTAAQI (322 aa)) form a ribokinase region. 198–201 (NRRE) lines the ATP pocket. Asp267 is a catalytic residue. Residues 350-479 (FTNGCFDLVH…TSSLVAKART (130 aa)) are cytidylyltransferase.

It in the N-terminal section; belongs to the carbohydrate kinase PfkB family. The protein in the C-terminal section; belongs to the cytidylyltransferase family. In terms of assembly, homodimer.

It catalyses the reaction D-glycero-beta-D-manno-heptose 7-phosphate + ATP = D-glycero-beta-D-manno-heptose 1,7-bisphosphate + ADP + H(+). It carries out the reaction D-glycero-beta-D-manno-heptose 1-phosphate + ATP + H(+) = ADP-D-glycero-beta-D-manno-heptose + diphosphate. The protein operates within nucleotide-sugar biosynthesis; ADP-L-glycero-beta-D-manno-heptose biosynthesis; ADP-L-glycero-beta-D-manno-heptose from D-glycero-beta-D-manno-heptose 7-phosphate: step 1/4. It participates in nucleotide-sugar biosynthesis; ADP-L-glycero-beta-D-manno-heptose biosynthesis; ADP-L-glycero-beta-D-manno-heptose from D-glycero-beta-D-manno-heptose 7-phosphate: step 3/4. Catalyzes the phosphorylation of D-glycero-D-manno-heptose 7-phosphate at the C-1 position to selectively form D-glycero-beta-D-manno-heptose-1,7-bisphosphate. Functionally, catalyzes the ADP transfer from ATP to D-glycero-beta-D-manno-heptose 1-phosphate, yielding ADP-D-glycero-beta-D-manno-heptose. The protein is Bifunctional protein HldE of Azorhizobium caulinodans (strain ATCC 43989 / DSM 5975 / JCM 20966 / LMG 6465 / NBRC 14845 / NCIMB 13405 / ORS 571).